Reading from the N-terminus, the 430-residue chain is Ribulose bisphosphate carboxylase (430 aa).

Residue Lys-160 is the Proton acceptor of the active site. Substrate is bound at residue Lys-162. Mg(2+)-binding residues include Lys-186, Asp-188, and Glu-189. Lys-186 carries the post-translational modification N6-carboxylysine. His-278 serves as the catalytic Proton acceptor. Substrate is bound by residues Arg-279, His-311, 348 to 350 (SGG), and 370 to 373 (QAGG).

This sequence belongs to the RuBisCO large chain family. Type III subfamily. Homodimer or homodecamer. In contrast to form I RuBisCO, the form III RuBisCO is composed solely of large subunits. It depends on Mg(2+) as a cofactor.

The enzyme catalyses 2 (2R)-3-phosphoglycerate + 2 H(+) = D-ribulose 1,5-bisphosphate + CO2 + H2O. It carries out the reaction D-ribulose 1,5-bisphosphate + O2 = 2-phosphoglycolate + (2R)-3-phosphoglycerate + 2 H(+). Catalyzes the addition of molecular CO(2) and H(2)O to ribulose 1,5-bisphosphate (RuBP), generating two molecules of 3-phosphoglycerate (3-PGA). Functions in an archaeal AMP degradation pathway, together with AMP phosphorylase and R15P isomerase. This chain is Ribulose bisphosphate carboxylase, found in Pyrococcus horikoshii (strain ATCC 700860 / DSM 12428 / JCM 9974 / NBRC 100139 / OT-3).